Here is a 161-residue protein sequence, read N- to C-terminus: MENEPDTICILVDADACPVKAEIYRVAERHNLPVVIVANSFIAIPREAQRVERVVVSGNLDAADDWIAEHSRPGAVVVTADIPLASHALEKGASVIAPNGRIHTQSTIGNTLATRNLMDSLRSAGEVTGGPAPFAPKDRSAFLSALDLAIVRLKRAGFHAS.

Belongs to the UPF0178 family.

In Brucella abortus biovar 1 (strain 9-941), this protein is UPF0178 protein BruAb1_1955.